The sequence spans 291 residues: uncharacterized protein (291 aa).

The region spanning 1–58 is the HTH lysR-type domain; the sequence is MDLKWLQTFIAAAESESFREAAEHLYLTQPAVSQHMRKLEDELDMRLFLHSGRRVVLT. Positions 18 to 37 form a DNA-binding region, H-T-H motif; the sequence is FREAAEHLYLTQPAVSQHMR.

The protein belongs to the LysR transcriptional regulatory family.

This is an uncharacterized protein from Bacillus subtilis (strain 168).